Here is a 314-residue protein sequence, read N- to C-terminus: Pantothenate kinase (314 aa).

An ATP-binding site is contributed by 93–100; sequence GSVAVGKS.

The protein belongs to the prokaryotic pantothenate kinase family.

Its subcellular location is the cytoplasm. The catalysed reaction is (R)-pantothenate + ATP = (R)-4'-phosphopantothenate + ADP + H(+). It functions in the pathway cofactor biosynthesis; coenzyme A biosynthesis; CoA from (R)-pantothenate: step 1/5. The sequence is that of Pantothenate kinase from Shewanella denitrificans (strain OS217 / ATCC BAA-1090 / DSM 15013).